Reading from the N-terminus, the 606-residue chain is Adenine deaminase (606 aa).

Belongs to the metallo-dependent hydrolases superfamily. Adenine deaminase family. Requires Mn(2+) as cofactor.

It catalyses the reaction adenine + H2O + H(+) = hypoxanthine + NH4(+). In Rubrobacter xylanophilus (strain DSM 9941 / JCM 11954 / NBRC 16129 / PRD-1), this protein is Adenine deaminase.